Here is a 167-residue protein sequence, read N- to C-terminus: CGG triplet repeat-binding protein 1 (167 aa).

A Phosphoserine modification is found at serine 56. Residues arginine 80–arginine 84 carry the Nuclear localization signal motif. Serine 164 carries the phosphoserine modification.

In terms of tissue distribution, ubiquitous. Highly expressed in placenta, thymus, lymph nodes, cerebellum and cerebral cortex. Low expression in other regions of the brain.

It localises to the nucleus. In terms of biological role, binds to nonmethylated 5'-d(CGG)(n)-3' trinucleotide repeats in the FMR1 promoter. May play a role in regulating FMR1 promoter. The sequence is that of CGG triplet repeat-binding protein 1 (CGGBP1) from Homo sapiens (Human).